The following is a 343-amino-acid chain: Cytoplasmic tRNA 2-thiolation protein 1 (343 aa).

Belongs to the TtcA family. CTU1/NCS6/ATPBD3 subfamily.

The protein localises to the cytoplasm. The protein operates within tRNA modification; 5-methoxycarbonylmethyl-2-thiouridine-tRNA biosynthesis. Functionally, plays a central role in 2-thiolation of mcm(5)S(2)U at tRNA wobble positions of tRNA(Lys), tRNA(Glu) and tRNA(Gln). Directly binds tRNAs and probably acts by catalyzing adenylation of tRNAs, an intermediate required for 2-thiolation. It is unclear whether it acts as a sulfurtransferase that transfers sulfur from thiocarboxylated URM1 onto the uridine of tRNAs at wobble position. The chain is Cytoplasmic tRNA 2-thiolation protein 1 from Drosophila erecta (Fruit fly).